The primary structure comprises 275 residues: Diaminopimelate epimerase (275 aa).

The substrate site is built by N20 and N63. C72 serves as the catalytic Proton donor. Substrate-binding positions include 73 to 74 (GN), N179, and 197 to 198 (ER). The Proton acceptor role is filled by C207. 208–209 (GT) serves as a coordination point for substrate.

This sequence belongs to the diaminopimelate epimerase family. In terms of assembly, homodimer.

It localises to the cytoplasm. It catalyses the reaction (2S,6S)-2,6-diaminopimelate = meso-2,6-diaminopimelate. It participates in amino-acid biosynthesis; L-lysine biosynthesis via DAP pathway; DL-2,6-diaminopimelate from LL-2,6-diaminopimelate: step 1/1. In terms of biological role, catalyzes the stereoinversion of LL-2,6-diaminopimelate (L,L-DAP) to meso-diaminopimelate (meso-DAP), a precursor of L-lysine and an essential component of the bacterial peptidoglycan. This is Diaminopimelate epimerase from Chlamydia trachomatis serovar A (strain ATCC VR-571B / DSM 19440 / HAR-13).